The sequence spans 355 residues: 1D-myo-inositol 2-acetamido-2-deoxy-alpha-D-glucopyranoside deacetylase 3 (355 aa).

3 residues coordinate Zn(2+): histidine 31, aspartate 34, and histidine 169.

This sequence belongs to the MshB deacetylase family. The cofactor is Zn(2+).

It catalyses the reaction 1D-myo-inositol 2-acetamido-2-deoxy-alpha-D-glucopyranoside + H2O = 1D-myo-inositol 2-amino-2-deoxy-alpha-D-glucopyranoside + acetate. Catalyzes the deacetylation of 1D-myo-inositol 2-acetamido-2-deoxy-alpha-D-glucopyranoside (GlcNAc-Ins) in the mycothiol biosynthesis pathway. The sequence is that of 1D-myo-inositol 2-acetamido-2-deoxy-alpha-D-glucopyranoside deacetylase 3 from Catenulispora acidiphila (strain DSM 44928 / JCM 14897 / NBRC 102108 / NRRL B-24433 / ID139908).